We begin with the raw amino-acid sequence, 952 residues long: MSRLIVKNLPNGMKEERFRQLFAAFGTLTDCSLKFTKDGKFRKFGFIGFKSEEEAQAALNHFHRSFIDTTRITVEFCKSFGDPSKPRAWSKHAQKSSQPKQPSQDSVPSDTKKDKKKKGPSDLEKLKEDAKFQEFLSIHQKRTQVATWANDALEAKLPKAKTKASSDYLNFDSDSNSDSGQESEEEPAREDPEEEQGLQPKAAVQKELSDMDYLKSKMVRAEVSSEDEDEEDSEDEAVNCEEGSEEEEEEGSPASPAKQGGVSRGAVPGVLRPQEAAGKVEKPVSQKEPTTPYTVKLRGAPFNVTEKNVIEFLAPLKPVAIRIVRNAHGNKTGYVFVDLSSEEEVKKALKCNRDYMGGRYIEVFREKQAPTARGPPKSTTPWQGRTLGENEEEEDLADSGRLFVRNLSYTSSEEDLEKLFSAYGPLSELHYPIDSLTKKPKGFAFVTFMFPEHAVKAYAEVDGQVFQGRMLHVLPSTIKKEASQEANAPGSSYKKKKEAMDKANSSSSHNWNTLFMGPNAVADAIAQKYNATKSQVFDHETRGSVAVRVALGETQLVQEVRSFLIDNGVCLDSFSQAAAERSKTVILAKNLPAGTLAAEIQETFSRFGSLGRVLLPEGGITAIVEFLEPLEARKAFRHLAYSKFHHVPLYLEWAPIGVFGAAPQKKDSQHEQPAEKAEVEQETVLDPEGEKASVEGAEASTGKMEEEEEEEEEEEEESIPGCTLFIKNLNFSTTEETLKGVFSKVGAIKSCTISKKKNKAGVLLSMGFGFVEYKKPEQAQKALKQLQGHTVDGHKLEVRISERATKPALTSTRKKQVPKKQTTSKILVRNIPFQANQREIRELFSTFGELKTVRLPKKMTGTGAHRGFGFVDFITKQDAKKAFNALCHSTHLYGRRLVLEWADSEVTVQTLRRKTARHFQEPPKKKRSAVLDGILEQLEDEDNSDGEQALQL.

The 78-residue stretch at 2–79 folds into the RRM 1 domain; it reads SRLIVKNLPN…TRITVEFCKS (78 aa). 3 disordered regions span residues 85–126, 159–267, and 367–395; these read KPRA…LEKL, KAKT…RGAV, and KQAP…EEED. Residues 95-109 are compositionally biased toward low complexity; that stretch reads KSSQPKQPSQDSVPS. Residues 163–180 are compositionally biased toward polar residues; the sequence is KASSDYLNFDSDSNSDSG. 3 positions are modified to phosphoserine: Ser177, Ser179, and Ser183. 2 stretches are compositionally biased toward acidic residues: residues 181 to 196 and 224 to 251; these read QESE…EEEQ and SSED…EEEG. RRM domains lie at 293-368 and 400-478; these read YTVK…REKQ and GRLF…PSTI. Residue Lys479 forms a Glycyl lysine isopeptide (Lys-Gly) (interchain with G-Cter in SUMO2) linkage. Residues 481-504 are disordered; that stretch reads EASQEANAPGSSYKKKKEAMDKAN. Positions 584 to 656 constitute an RRM 4 domain; that stretch reads TVILAKNLPA…VPLYLEWAPI (73 aa). Over residues 664 to 679 the composition is skewed to basic and acidic residues; that stretch reads QKKDSQHEQPAEKAEV. The segment at 664 to 719 is disordered; it reads QKKDSQHEQPAEKAEVEQETVLDPEGEKASVEGAEASTGKMEEEEEEEEEEEEESI. Position 693 is a phosphoserine (Ser693). Residues 705–718 show a composition bias toward acidic residues; the sequence is EEEEEEEEEEEEES. 2 RRM domains span residues 722-803 and 824-904; these read CTLF…ISER and SKIL…WADS. Phosphoserine is present on residues Ser928 and Ser944.

The protein belongs to the RRM MRD1 family. In terms of tissue distribution, expressed in the crypts of Lieberkuhn of the intestine (at protein level).

Its subcellular location is the nucleus. The protein resides in the nucleolus. It localises to the nucleoplasm. The protein localises to the cytoplasm. It is found in the chromosome. Plays a role in embryo pre-implantation development. The protein is Probable RNA-binding protein 19 (Rbm19) of Mus musculus (Mouse).